Consider the following 281-residue polypeptide: ATP phosphoribosyltransferase (281 aa).

Belongs to the ATP phosphoribosyltransferase family. Long subfamily. Requires Mg(2+) as cofactor.

The protein localises to the cytoplasm. It catalyses the reaction 1-(5-phospho-beta-D-ribosyl)-ATP + diphosphate = 5-phospho-alpha-D-ribose 1-diphosphate + ATP. It functions in the pathway amino-acid biosynthesis; L-histidine biosynthesis; L-histidine from 5-phospho-alpha-D-ribose 1-diphosphate: step 1/9. Its activity is regulated as follows. Feedback inhibited by histidine. Its function is as follows. Catalyzes the condensation of ATP and 5-phosphoribose 1-diphosphate to form N'-(5'-phosphoribosyl)-ATP (PR-ATP). Has a crucial role in the pathway because the rate of histidine biosynthesis seems to be controlled primarily by regulation of HisG enzymatic activity. This chain is ATP phosphoribosyltransferase, found in Corynebacterium glutamicum (strain R).